The primary structure comprises 329 residues: MVQGLPGEFEDYLYRVIASLYRYAERLVVVDYPSSPTRRSIDLIVSLPGSRVVLIKAIYDASLISKKEVEELSAVANSLGVSAVIIAERMGREDLLTGVVYDRYGVNMVNLETFENFVSGREEVYVTRYKDIYTVSISSEKLREKRLEKGLSLGHLAYMLKTSRKSIYEYERGVMSPSVEKAEKLVDILGEEILEPIDILTSPRKPVSKRDFDKPEEALVGEKLLELGFKVSHAKRTVVDLVAGRSGEEGVGSRIMIVVKRSREGRERMMSRIMKGVKMGSILSSSLYAVVNREEKSLIKDIDYTKTIVKDVREFINDVSRGRVEENEE.

The HTH cro/C1-type domain occupies 142-200 (LREKRLEKGLSLGHLAYMLKTSRKSIYEYERGVMSPSVEKAEKLVDILGEEILEPIDIL). Residues 153–172 (LGHLAYMLKTSRKSIYEYER) constitute a DNA-binding region (H-T-H motif).

The protein is Putative HTH-type transcriptional regulatory protein APE_0778 of Aeropyrum pernix (strain ATCC 700893 / DSM 11879 / JCM 9820 / NBRC 100138 / K1).